A 308-amino-acid polypeptide reads, in one-letter code: Ferredoxin--NADP reductase (308 aa).

Residues Glu-26, Gln-34, Tyr-39, Val-77, Phe-106, Asp-266, and Thr-306 each coordinate FAD.

The protein belongs to the ferredoxin--NADP reductase type 2 family. As to quaternary structure, homodimer. It depends on FAD as a cofactor.

It catalyses the reaction 2 reduced [2Fe-2S]-[ferredoxin] + NADP(+) + H(+) = 2 oxidized [2Fe-2S]-[ferredoxin] + NADPH. This is Ferredoxin--NADP reductase from Lactobacillus delbrueckii subsp. bulgaricus (strain ATCC 11842 / DSM 20081 / BCRC 10696 / JCM 1002 / NBRC 13953 / NCIMB 11778 / NCTC 12712 / WDCM 00102 / Lb 14).